A 389-amino-acid chain; its full sequence is Large ribosomal subunit protein uL3 (389 aa).

The segment at 1-36 (MSHRKFEHPRHGSLGFLPRKRSSRHRGKVKSFPKDD) is disordered. Positions 18–31 (PRKRSSRHRGKVKS) are enriched in basic residues.

It belongs to the universal ribosomal protein uL3 family.

Its subcellular location is the cytoplasm. The L3 protein is a component of the large subunit of cytoplasmic ribosomes. This Oryza sativa subsp. japonica (Rice) protein is Large ribosomal subunit protein uL3 (RPL3).